A 290-amino-acid polypeptide reads, in one-letter code: ATP synthase gamma chain (290 aa).

This sequence belongs to the ATPase gamma chain family. In terms of assembly, F-type ATPases have 2 components, CF(1) - the catalytic core - and CF(0) - the membrane proton channel. CF(1) has five subunits: alpha(3), beta(3), gamma(1), delta(1), epsilon(1). CF(0) has three main subunits: a, b and c.

The protein resides in the cell inner membrane. Its function is as follows. Produces ATP from ADP in the presence of a proton gradient across the membrane. The gamma chain is believed to be important in regulating ATPase activity and the flow of protons through the CF(0) complex. The sequence is that of ATP synthase gamma chain from Erythrobacter litoralis (strain HTCC2594).